Reading from the N-terminus, the 881-residue chain is Alanine--tRNA ligase (881 aa).

Positions 422–440 (FEDEMQKQKERARSARSTE) are enriched in basic and acidic residues. The segment at 422 to 445 (FEDEMQKQKERARSARSTEKSMGV) is disordered. Zn(2+) is bound by residues His567, His571, Cys669, and His673.

This sequence belongs to the class-II aminoacyl-tRNA synthetase family. Requires Zn(2+) as cofactor.

The protein resides in the cytoplasm. It carries out the reaction tRNA(Ala) + L-alanine + ATP = L-alanyl-tRNA(Ala) + AMP + diphosphate. Catalyzes the attachment of alanine to tRNA(Ala) in a two-step reaction: alanine is first activated by ATP to form Ala-AMP and then transferred to the acceptor end of tRNA(Ala). Also edits incorrectly charged Ser-tRNA(Ala) and Gly-tRNA(Ala) via its editing domain. The polypeptide is Alanine--tRNA ligase (Pediococcus pentosaceus (strain ATCC 25745 / CCUG 21536 / LMG 10740 / 183-1w)).